The following is a 344-amino-acid chain: MSKACWLVAAIIFTAATVVYGQQAPCFFVFGDSMSDNGNNNNLKSEAKVNFSPYGNDFPKGPTGRFSNGRTIPDIIGELSGFKDFIPPFAEASPEQAHTGMNYASGGSGLREETSEHLGDRISIRKQLQNHKTSITKANVPAERLQQCLYMINIGSNDYINNYFMSKPYNTKRRYTPKQYAYSLIIIYRSHLKNLHRLGARKVAVFGLSQIGCTPKIMKSHSDGKICSREVNEAVKIFNKNLDDLVMDFNKKVRGAKFTYVDLFSGGDPQAFIFLGFKVGGKSCCTVNPGEELCVPNQPVCANRTEYVFWDDLHSTEATNMVVAKGSFDGIISKPYSIAQLAKE.

The N-terminal stretch at 1–21 (MSKACWLVAAIIFTAATVVYG) is a signal peptide. Ser33 functions as the Nucleophile in the catalytic mechanism. A glycan (N-linked (GlcNAc...) asparagine) is linked at Asn303. Active-site residues include Asp311 and His314.

This sequence belongs to the 'GDSL' lipolytic enzyme family.

The protein resides in the secreted. The chain is GDSL esterase/lipase At2g19010 from Arabidopsis thaliana (Mouse-ear cress).